The primary structure comprises 270 residues: Interleukin-1 alpha (270 aa).

Residues Met-1–Arg-112 constitute a propeptide that is removed on maturation. Lys-82 is modified (N6-acetyllysine). The interval Lys-82–Leu-86 is nuclear localization signal (NLS). Residue Ser-87 is modified to Phosphoserine. 2 N-linked (GlcNAc...) asparagine glycosylation sites follow: Asn-102 and Asn-141.

Belongs to the IL-1 family. As to quaternary structure, monomer. Interacts with TMED10; the interaction mediates the translocation from the cytoplasm into the ERGIC (endoplasmic reticulum-Golgi intermediate compartment) and thereby secretion. Interacts with IL1R1. Interacts with S100A13; this interaction is the first step in the export of IL1A, followed by direct translocation of this complex across the plasma membrane. Acetylated within its nuclear localization sequence, which impacts subcellular localization. Post-translationally, proteolytic processed by CAPN1 in a calcium-dependent manner. Cleavage from 31 kDa precursor to 18 kDa biologically active molecules. In terms of processing, phosphorylated. Phosphorylation greatly enhances susceptibility to digestion and promotes the conversion of pre-IL1A alpha to the biologically active IL1A.

The protein localises to the nucleus. Its subcellular location is the cytoplasm. The protein resides in the secreted. Its function is as follows. Cytokine constitutively present intracellularly in nearly all resting non-hematopoietic cells that plays an important role in inflammation and bridges the innate and adaptive immune systems. After binding to its receptor IL1R1 together with its accessory protein IL1RAP, forms the high affinity interleukin-1 receptor complex. Signaling involves the recruitment of adapter molecules such as MYD88, IRAK1 or IRAK4. In turn, mediates the activation of NF-kappa-B and the three MAPK pathways p38, p42/p44 and JNK pathways. Within the cell, acts as an alarmin and cell death results in its liberation in the extracellular space after disruption of the cell membrane to induce inflammation and alert the host to injury or damage. In addition to its role as a danger signal, which occurs when the cytokine is passively released by cell necrosis, directly senses DNA damage and acts as signal for genotoxic stress without loss of cell integrity. This chain is Interleukin-1 alpha (IL1A), found in Sus scrofa (Pig).